Reading from the N-terminus, the 187-residue chain is Elongation factor P (187 aa).

This sequence belongs to the elongation factor P family.

It is found in the cytoplasm. It functions in the pathway protein biosynthesis; polypeptide chain elongation. Involved in peptide bond synthesis. Stimulates efficient translation and peptide-bond synthesis on native or reconstituted 70S ribosomes in vitro. Probably functions indirectly by altering the affinity of the ribosome for aminoacyl-tRNA, thus increasing their reactivity as acceptors for peptidyl transferase. In Mycoplasmopsis pulmonis (strain UAB CTIP) (Mycoplasma pulmonis), this protein is Elongation factor P.